The sequence spans 68 residues: Lipopolysaccharide export system ATP-binding protein LptB (68 aa).

The protein belongs to the ABC transporter superfamily. Outer membrane lipopolysaccharide export (TC 1.B.42) family. In terms of assembly, component of the lipopolysaccharide transport and assembly complex. The LptBFG transporter is composed of two ATP-binding proteins (LptB) and two transmembrane proteins (LptF and LptG).

The protein resides in the cytoplasm. It localises to the cell inner membrane. Part of the ABC transporter complex LptBFG involved in the translocation of lipopolysaccharide (LPS) from the inner membrane to the outer membrane. Probably responsible for energy coupling to the transport system. The protein is Lipopolysaccharide export system ATP-binding protein LptB (lptB) of Klebsiella oxytoca.